Consider the following 81-residue polypeptide: uncharacterized protein (81 aa).

The segment at 1 to 58 is disordered; sequence MPQSKQQFKRQGARQRDSKGKFVKARTGMATAPPAAVSTAAPTASTMTPTGSSTTATI. The span at 30–58 shows a compositional bias: low complexity; that stretch reads ATAPPAAVSTAAPTASTMTPTGSSTTATI.

This is an uncharacterized protein from Caenorhabditis elegans.